The primary structure comprises 267 residues: Octanoyltransferase (267 aa).

The BPL/LPL catalytic domain maps to 77 to 265; that stretch reads GTASELVWLV…AFESVFGPRQ (189 aa). Substrate contacts are provided by residues 116 to 123, 196 to 198, and 209 to 211; these read RGGEYTYH, AIG, and GIA. C227 acts as the Acyl-thioester intermediate in catalysis.

This sequence belongs to the LipB family.

The protein localises to the cytoplasm. It carries out the reaction octanoyl-[ACP] + L-lysyl-[protein] = N(6)-octanoyl-L-lysyl-[protein] + holo-[ACP] + H(+). It functions in the pathway protein modification; protein lipoylation via endogenous pathway; protein N(6)-(lipoyl)lysine from octanoyl-[acyl-carrier-protein]: step 1/2. Its function is as follows. Catalyzes the transfer of endogenously produced octanoic acid from octanoyl-acyl-carrier-protein onto the lipoyl domains of lipoate-dependent enzymes. Lipoyl-ACP can also act as a substrate although octanoyl-ACP is likely to be the physiological substrate. This chain is Octanoyltransferase, found in Brucella suis biovar 1 (strain 1330).